A 270-amino-acid polypeptide reads, in one-letter code: Bacterial microcompartment shell protein PduB (270 aa).

Residues 6 to 18 are probable helix that binds cargo to the BMC shell; it reads LVEQIMAQVIARV. BMC circularly permuted domains follow at residues 47-152 and 154-258; these read EFVG…DRTF and DVYG…LATL.

It belongs to the EutL/PduB family. Homotrimerizes to form a pseudohexamer with a central pore. The trimers pack into an array. In purified BMCs seen as a 28.0 kDa and 25.0 kDa form, both of which have been N-terminally sequenced and whose N-fMet is removed; the smaller form is called PduB'.

Its subcellular location is the bacterial microcompartment. It functions in the pathway polyol metabolism; 1,2-propanediol degradation. Functionally, the two proteins produced are among the major shell proteins of the bacterial microcompartment (BMC) dedicated to 1,2-propanediol (1,2-PD) degradation. Required for structural integrity of BMCs and to mitigate propionaldehyde toxicity. The N-terminal 13 residues are important for correct assembly of the BMC shell. The isolated BMC shell component protein ratio for J:A:B':B:K:T:U is approximately 15:10:7:6:1:1:2. The N-terminus of the long form (PduB) is required for correct formation of BMCs, deletions in the first 37 residues have substantially reduced levels of the major lumen enzymes. May play a major role in binding the enzyme contents to the shell. Its function is as follows. The 1,2-PD-specific bacterial microcompartment (BMC) concentrates low levels of 1,2-PD catabolic enzymes, concentrates volatile reaction intermediates thus enhancing pathway flux and keeps the level of toxic, mutagenic propionaldehyde low. This Salmonella typhimurium (strain LT2 / SGSC1412 / ATCC 700720) protein is Bacterial microcompartment shell protein PduB.